The sequence spans 71 residues: Potassium voltage-gated channel subfamily E member 2 (71 aa).

Residues 7–27 (VILYLMVMIGMFSFIIVAILV) form a helical membrane-spanning segment. Residues 28 to 71 (STVKSKRREHSNDPYHQYIVEDWQEKYKSQILHFEEAKATIHEN) lie on the Cytoplasmic side of the membrane.

It belongs to the potassium channel KCNE family. As to quaternary structure, interacts with KCNB1. Associates with KCNH2/ERG1. May associate with KCNQ2 and KCNQ3. Associates with HCN1 and probably HCN2. Heteromultimer with KCNC2. Interacts with KCNC2. Interacts with KCNQ1; forms a heterooligomer complex that targets to the membrane raft and leading to currents with an apparently instantaneous activation, a rapid deactivation process and a linear current-voltage relationship and decreases the amplitude of the outward current. As to expression, detected in heart; expression is highest in the SA node and the right atrium, and barely detectable in the ventricle.

The protein localises to the cell membrane. It localises to the apical cell membrane. Its function is as follows. Ancillary protein that functions as a regulatory subunit of the voltage-gated potassium (Kv) channel complex composed of pore-forming and potassium-conducting alpha subunits and of regulatory beta subunits. KCNE2 beta subunit modulates the gating kinetics and enhances stability of the channel complex. Alters the gating of the delayed rectifier Kv channel containing KCNB1 alpha subunit. Associates with KCNH2/HERG alpha subunit Kv channel to form the rapidly activating component of the delayed rectifying potassium current (IKr) in heart. May associate with KCNQ2 and/or KCNQ3 alpha subunits to modulate the native M-type current. May associate with HCN1 and HCN2 channel subunits to increase potassium current. Forms a heterooligomer complex with KCNQ1/KVLQT1 alpha subunits which leads to currents with an apparently instantaneous activation, a rapid deactivation process and a linear current-voltage relationship and decreases the amplitude of the outward current. KCNQ1-KCNE2 channel associates with Na(+)-coupled myo-inositol symporter in the apical membrane of choroid plexus epithelium and regulates the myo-inositol gradient between blood and cerebrospinal fluid with an impact on neuron excitability. This Oryctolagus cuniculus (Rabbit) protein is Potassium voltage-gated channel subfamily E member 2 (KCNE2).